Reading from the N-terminus, the 225-residue chain is U2 small nuclear ribonucleoprotein B'' (225 aa).

The RRM 1 domain maps to 7-86 (HTIYINNMND…KPMRIQYAKT (80 aa)). A disordered region spans residues 100–144 (DKEKKKEKKKAKTMEQAAAAANKKPGQGTPNAANTQGTAAPNPQV). The residue at position 111 (K111) is an N6-acetyllysine; alternate. K111 participates in a covalent cross-link: Glycyl lysine isopeptide (Lys-Gly) (interchain with G-Cter in SUMO2); alternate. Residues 113-123 (MEQAAAAANKK) show a composition bias toward low complexity. Residues 127 to 140 (GTPNAANTQGTAAP) are compositionally biased toward polar residues. Y151 carries the phosphotyrosine modification. Positions 151 to 225 (YILFLNNLPE…HAMKITYAKK (75 aa)) constitute an RRM 2 domain.

The protein belongs to the RRM U1 A/B'' family. As to quaternary structure, identified in the spliceosome B complex. Identified in the spliceosome C complex. Present in a spliceosome complex assembled in vitro, and composed of SNRPB2, HPRP8BP and CRNKL1. Contributes to the binding of stem loop IV of U2 snRNA with SNRPP1.

Its subcellular location is the nucleus. Involved in pre-mRNA splicing as component of the spliceosome. Associated with sn-RNP U2, where it contributes to the binding of stem loop IV of U2 snRNA. In Mus musculus (Mouse), this protein is U2 small nuclear ribonucleoprotein B'' (Snrpb2).